The sequence spans 177 residues: Thioredoxin M-type, chloroplastic (177 aa).

A chloroplast-targeting transit peptide spans 1-64 (MAAFTCTSSP…SRLRRGGIIC (64 aa)). Residues 65–177 (EAQDTATGIP…LATSIDKFLQ (113 aa)) form the Thioredoxin domain. Catalysis depends on nucleophile residues C101 and C104. A disulfide bridge links C101 with C104.

It belongs to the thioredoxin family. Plant M-type subfamily. As to quaternary structure, forms a complex with heterodimeric ferredoxin-thioredoxin reductase (FTR) and ferredoxin.

The protein resides in the plastid. Its subcellular location is the chloroplast. Participates in various redox reactions through the reversible oxidation of the active center dithiol to a disulfide. The M form is known to activate NADP-malate dehydrogenase. The chain is Thioredoxin M-type, chloroplastic from Brassica napus (Rape).